The sequence spans 368 residues: Galactoside 2-alpha-L-fucosyltransferase Sec1 (368 aa).

Residues 1–20 lie on the Cytoplasmic side of the membrane; that stretch reads MPSDSCLLSLTVLQRLRAIC. The helical; Signal-anchor for type II membrane protein transmembrane segment at 21 to 41 threads the bilayer; the sequence is PPLSTFYLFFVIFVVSTIFHC. The Lumenal segment spans residues 42 to 368; the sequence is HRRLGLVPAP…APKRHWGALL (327 aa). N-linked (GlcNAc...) asparagine glycans are attached at residues Asn195, Asn289, and Asn315.

The protein belongs to the glycosyltransferase 11 family.

It is found in the golgi apparatus. The protein resides in the golgi stack membrane. The enzyme catalyses a ganglioside GM1 + GDP-beta-L-fucose = a ganglioside Fuc-GM1 + GDP + H(+). It functions in the pathway protein modification; protein glycosylation. Functionally, catalyzes the transfer of alpha 1,2-linked fucose to ganglioside GM1 and galacto-N-biose. This is Galactoside 2-alpha-L-fucosyltransferase Sec1 from Mus musculus (Mouse).